The sequence spans 474 residues: Myocyte-specific enhancer factor 2C (474 aa).

Residues arginine 3 to tyrosine 57 form the MADS-box domain. Lysine 4 is subject to N6-acetyllysine. The segment at residues alanine 58–glutamate 86 is a DNA-binding region (mef2-type). Residue serine 59 is modified to Phosphoserine; by CK2. Residues lysine 91–arginine 118 are disordered. Serine 98 and serine 106 each carry phosphoserine. Phosphothreonine is present on glycine 108. Serine 110 is subject to Phosphoserine. 2 positions are modified to N6-acetyllysine: lysine 116 and lysine 119. 2 positions are modified to phosphoserine: serine 222 and serine 228. 2 positions are modified to N6-acetyllysine: lysine 234 and lysine 239. Serine 240 carries the post-translational modification Phosphoserine. An N6-acetyllysine mark is found at lysine 252 and lysine 264. The segment at serine 271–leucine 278 is beta domain. Threonine 293 and threonine 300 each carry phosphothreonine; by MAPK14. Residues alanine 368–arginine 399 form a transcription repressor region. A compositionally biased stretch (polar residues) spans serine 375–isoleucine 390. A disordered region spans residues serine 375–threonine 474. A Glycyl lysine isopeptide (Lys-Gly) (interchain with G-Cter in SUMO) cross-link involves residue lysine 391. Serine 396 carries the post-translational modification Phosphoserine; by CDK5. The residue at position 420 (serine 420) is a Phosphoserine; by MAPK7. Positions serine 420 to aspartate 433 are enriched in low complexity. Positions glycine 434 to phenylalanine 444 are enriched in basic and acidic residues. A Phosphoserine modification is found at serine 446.

Belongs to the MEF2 family. Forms a complex with class II HDACs in undifferentiating cells. On myogenic differentiation, HDACs are released into the cytoplasm allowing MEF2s to interact with other proteins for activation. Interacts with EP300 in differentiating cells; the interaction acetylates MEF2C leading to increased DNA binding and activation. Interacts with HDAC7 and CARM1. Interacts with HDAC4, HDAC7 AND HDAC9; the interaction with HDACs represses transcriptional activity. Interacts with LPIN1. Interacts with MYOCD. Interacts with AKAP13. Interacts with FOXK1; the interaction inhibits MEF2C transactivation activity. Interacts (via N-terminus) with HABP4; this interaction decreases DNA-binding activity of MEF2C in myocardial cells in response to mechanical stress. Interacts with JPH2; interaction specifically takes place with the Junctophilin-2 N-terminal fragment cleavage product of JPH2. Interacts (via MADS box) with SOX18. Interacts with PHF7; the interaction promotes MEF2C binding to its transcription targets. Phosphorylation on Ser-59 enhances DNA binding activity. Phosphorylation on Ser-396 is required for Lys-391 sumoylation and inhibits transcriptional activity. Post-translationally, acetylated by p300 on several sites in diffentiating myocytes. Acetylation on Lys-4 increases DNA binding and transactivation. In terms of processing, sumoylated on Lys-391 with SUMO2 but not by SUMO1 represses transcriptional activity. Proteolytically cleaved in cerebellar granule neurons, probably by caspase 7, following neurotoxicity. Preferentially cleaves the CDK5-mediated hyperphosphorylated form which leads to neuron apoptosis and transcriptional inactivation. In terms of tissue distribution, widely expressed though mainly restricted to skeletal and cardiac muscle, brain, neurons and lymphocytes. Beta domain-lacking isoforms are the most predominantly expressed in all tissues including skeletal and cardiac muscle and brain. Only brain expresses all isoforms. Expression occurs primarily in the internal granule cell layer of the olfactory bulb, cortex, thalamus, hippocampus and cerebellum. Low levels in the cerebellum and hindbrain. Expressed throughout the cortex, including the frontal and entorhinal cortex, dentate gyrus, and basolateral amygdala. Selectively expressed in B-cells but not in T-cells, and its expression increases as B-cells mature.

It localises to the nucleus. It is found in the cytoplasm. Its subcellular location is the sarcoplasm. In terms of biological role, transcription activator which binds specifically to the MEF2 element present in the regulatory regions of many muscle-specific genes. Controls cardiac morphogenesis and myogenesis, and is also involved in vascular development. Enhances transcriptional activation mediated by SOX18. May also be involved in neurogenesis and in the development of cortical architecture. Isoforms that lack the repressor domain are more active than isoform 1. Plays an essential role in hippocampal-dependent learning and memory by suppressing the number of excitatory synapses and thus regulating basal and evoked synaptic transmission. Crucial for normal neuronal development, distribution, and electrical activity in the neocortex. Necessary for proper development of megakaryocytes and platelets and for bone marrow B-lymphopoiesis. Required for B-cell survival and proliferation in response to BCR stimulation, efficient IgG1 antibody responses to T-cell-dependent antigens and for normal induction of germinal center B-cells. The protein is Myocyte-specific enhancer factor 2C of Mus musculus (Mouse).